The primary structure comprises 123 residues: Large ribosomal subunit protein uL14c (123 aa).

It belongs to the universal ribosomal protein uL14 family. Part of the 50S ribosomal subunit.

Its subcellular location is the plastid. It localises to the chloroplast. Binds to 23S rRNA. The chain is Large ribosomal subunit protein uL14c from Oryza nivara (Indian wild rice).